A 126-amino-acid polypeptide reads, in one-letter code: CD59 glycoprotein (126 aa).

The N-terminal stretch at 1–22 (MRARRGFILLLLLAVLCSTGVS) is a signal peptide. Residues 23–110 (LRCYNCLDPV…NGAISLLGKT (88 aa)) form the UPAR/Ly6 domain. 5 disulfide bridges follow: cysteine 25-cysteine 48, cysteine 28-cysteine 35, cysteine 41-cysteine 61, cysteine 67-cysteine 85, and cysteine 86-cysteine 91. A glycan (N-linked (GlcNAc...) asparagine) is linked at asparagine 38. Asparagine 101 carries GPI-anchor amidated asparagine lipidation. A propeptide spans 102 to 126 (GAISLLGKTALLVTSVLAAILKPCF) (removed in mature form).

In terms of assembly, interacts with T-cell surface antigen CD2. In terms of processing, N- and O-glycosylated.

It localises to the cell membrane. It is found in the secreted. Potent inhibitor of the complement membrane attack complex (MAC) action, which protects self-cells from damage during complement activation. Acts by binding to the beta-haipins of C8 (C8A and C8B) components of the assembling MAC, forming an intermolecular beta-sheet that prevents incorporation of the multiple copies of C9 required for complete formation of the osmolytic pore. In Rattus norvegicus (Rat), this protein is CD59 glycoprotein.